A 390-amino-acid chain; its full sequence is NADH-quinone oxidoreductase subunit D (390 aa).

The protein belongs to the complex I 49 kDa subunit family. In terms of assembly, NDH-1 is composed of 14 different subunits. Subunits NuoB, C, D, E, F, and G constitute the peripheral sector of the complex.

Its subcellular location is the cell inner membrane. The enzyme catalyses a quinone + NADH + 5 H(+)(in) = a quinol + NAD(+) + 4 H(+)(out). In terms of biological role, NDH-1 shuttles electrons from NADH, via FMN and iron-sulfur (Fe-S) centers, to quinones in the respiratory chain. The immediate electron acceptor for the enzyme in this species is believed to be ubiquinone. Couples the redox reaction to proton translocation (for every two electrons transferred, four hydrogen ions are translocated across the cytoplasmic membrane), and thus conserves the redox energy in a proton gradient. The sequence is that of NADH-quinone oxidoreductase subunit D from Geobacter sulfurreducens (strain ATCC 51573 / DSM 12127 / PCA).